Consider the following 542-residue polypeptide: Chaperonin GroEL 5 (542 aa).

Residues 30-33 (TLGP), Lys51, 87-91 (DGTTT), Gly415, and Asp496 contribute to the ATP site.

Belongs to the chaperonin (HSP60) family. Forms a cylinder of 14 subunits composed of two heptameric rings stacked back-to-back. Interacts with the co-chaperonin GroES.

It localises to the cytoplasm. The catalysed reaction is ATP + H2O + a folded polypeptide = ADP + phosphate + an unfolded polypeptide.. Its function is as follows. Together with its co-chaperonin GroES, plays an essential role in assisting protein folding. The GroEL-GroES system forms a nano-cage that allows encapsulation of the non-native substrate proteins and provides a physical environment optimized to promote and accelerate protein folding. The chain is Chaperonin GroEL 5 from Rhizobium meliloti (strain 1021) (Ensifer meliloti).